We begin with the raw amino-acid sequence, 461 residues long: ADP-specific phosphofructokinase (461 aa).

Residues 1-457 (MVRELLEKAR…FASYLAMLKE (457 aa)) enclose the ADPK domain. Residues Glu-268, Glu-298, and Asp-441 each contribute to the Mg(2+) site. Asp-441 acts as the Proton acceptor in catalysis.

It belongs to the carbohydrate kinase PfkC family. Requires Mg(2+) as cofactor.

It is found in the cytoplasm. The catalysed reaction is beta-D-fructose 6-phosphate + ADP = beta-D-fructose 1,6-bisphosphate + AMP + H(+). Its pathway is carbohydrate degradation; glycolysis. In terms of biological role, catalyzes the phosphorylation of fructose 6-phosphate to fructose 1,6-bisphosphate using ADP as the phosphate donor. This is ADP-specific phosphofructokinase from Thermococcus zilligii.